Reading from the N-terminus, the 471-residue chain is Trigger factor (471 aa).

Residues D166–P245 form the PPIase FKBP-type domain. A disordered region spans residues A442–F471. Residues G447 to E456 show a composition bias toward acidic residues.

It belongs to the FKBP-type PPIase family. Tig subfamily.

The protein localises to the cytoplasm. It carries out the reaction [protein]-peptidylproline (omega=180) = [protein]-peptidylproline (omega=0). In terms of biological role, involved in protein export. Acts as a chaperone by maintaining the newly synthesized protein in an open conformation. Functions as a peptidyl-prolyl cis-trans isomerase. This is Trigger factor from Renibacterium salmoninarum (strain ATCC 33209 / DSM 20767 / JCM 11484 / NBRC 15589 / NCIMB 2235).